We begin with the raw amino-acid sequence, 322 residues long: Cytochrome c biogenesis protein CcsA (322 aa).

8 helical membrane-spanning segments follow: residues 19 to 39 (NAIF…LIIV), 43 to 63 (LICN…FFYL), 72 to 92 (FFPL…LLFI), 104 to 124 (VIGA…SLSL), 150 to 170 (MMLS…YLVL), 230 to 250 (TIGI…VWAN), 264 to 281 (TWAL…HARL), and 291 to 311 (AFLG…VNFL).

It belongs to the CcmF/CycK/Ccl1/NrfE/CcsA family. As to quaternary structure, may interact with Ccs1.

Its subcellular location is the plastid. The protein localises to the chloroplast thylakoid membrane. Functionally, required during biogenesis of c-type cytochromes (cytochrome c6 and cytochrome f) at the step of heme attachment. The chain is Cytochrome c biogenesis protein CcsA from Heterosigma akashiwo (strain NIES-293 / 8280G21-1).